The primary structure comprises 184 residues: Latex serine proteinase inhibitor (184 aa).

The cysteines at positions 45 and 89 are disulfide-linked. 2 N-linked (GlcNAc...) asparagine glycosylation sites follow: Asn84 and Asn90. Cysteines 142 and 153 form a disulfide.

The protein belongs to the protease inhibitor I3 (leguminous Kunitz-type inhibitor) family.

The protein localises to the secreted. It is found in the extracellular space. This Carica papaya (Papaya) protein is Latex serine proteinase inhibitor.